The chain runs to 308 residues: Ectoine dioxygenase (308 aa).

Gln-131 serves as a coordination point for L-ectoine. Lys-137 provides a ligand contact to 2-oxoglutarate. Residues His-148, Asp-150, and His-249 each coordinate Fe cation.

The protein belongs to the PhyH family. EctD subfamily. In terms of assembly, homodimer. Fe(2+) serves as cofactor.

The enzyme catalyses L-ectoine + 2-oxoglutarate + O2 = 5-hydroxyectoine + succinate + CO2. Its function is as follows. Involved in the biosynthesis of 5-hydroxyectoine, called compatible solute, which helps organisms to survive extreme osmotic stress by acting as a highly soluble organic osmolyte. Catalyzes the 2-oxoglutarate-dependent selective hydroxylation of L-ectoine to yield (4S,5S)-5-hydroxyectoine. This Bordetella bronchiseptica (strain ATCC BAA-588 / NCTC 13252 / RB50) (Alcaligenes bronchisepticus) protein is Ectoine dioxygenase.